The chain runs to 312 residues: Very-long-chain 3-oxoacyl-CoA reductase-like protein At1g24470 (312 aa).

The helical transmembrane segment at 14 to 34 threads the bilayer; the sequence is LHFVCFIGFLFLLRVLFIPLL. 52-81 contributes to the NADP(+) binding site; sequence GSWAMVTGATEGIGRAFAHELAKHGLNLIL. Position 190 (Ser-190) interacts with substrate. Residue Tyr-205 is the Proton acceptor of the active site.

This sequence belongs to the short-chain dehydrogenases/reductases (SDR) family. Expressed in green siliques, flowers, inflorescence stems and leaves. Not detected in roots.

It is found in the endoplasmic reticulum membrane. Probable reductase, but unlike KCR1, has no beta-ketoacyl-coenzyme A reductase activity. This is Very-long-chain 3-oxoacyl-CoA reductase-like protein At1g24470 (KCR2) from Arabidopsis thaliana (Mouse-ear cress).